The primary structure comprises 302 residues: tRNA-cytidine(32) 2-sulfurtransferase (302 aa).

Positions 45 to 50 (SGGKDS) match the PP-loop motif motif. The [4Fe-4S] cluster site is built by Cys120, Cys123, and Cys211.

This sequence belongs to the TtcA family. As to quaternary structure, homodimer. It depends on Mg(2+) as a cofactor. [4Fe-4S] cluster is required as a cofactor.

It localises to the cytoplasm. The enzyme catalyses cytidine(32) in tRNA + S-sulfanyl-L-cysteinyl-[cysteine desulfurase] + AH2 + ATP = 2-thiocytidine(32) in tRNA + L-cysteinyl-[cysteine desulfurase] + A + AMP + diphosphate + H(+). Its pathway is tRNA modification. In terms of biological role, catalyzes the ATP-dependent 2-thiolation of cytidine in position 32 of tRNA, to form 2-thiocytidine (s(2)C32). The sulfur atoms are provided by the cysteine/cysteine desulfurase (IscS) system. The protein is tRNA-cytidine(32) 2-sulfurtransferase of Cellvibrio japonicus (strain Ueda107) (Pseudomonas fluorescens subsp. cellulosa).